The sequence spans 401 residues: Lsg locus putative protein 1 (401 aa).

11 consecutive transmembrane segments (helical) span residues 8 to 28 (VIYL…LPYL), 36 to 56 (GYGS…VVSL), 87 to 107 (IIGS…LFYA), 132 to 152 (SYAF…VALL), 162 to 182 (KRIL…YFLY), 199 to 219 (ALFY…SFFL), 237 to 257 (LGLY…IQAL), 282 to 302 (WALF…IIPE), 320 to 340 (FILF…VNYL), 352 to 372 (CSVL…FTEI), and 374 to 394 (YIPY…YFMT).

It belongs to the polysaccharide synthase family. HI_0867/HI_1700 subfamily.

The protein localises to the cell membrane. The chain is Lsg locus putative protein 1 from Haemophilus influenzae (strain ATCC 51907 / DSM 11121 / KW20 / Rd).